We begin with the raw amino-acid sequence, 117 residues long: Non-specific lipid-transfer protein (117 aa).

The first 26 residues, 1–26 (MASSAVIKLACAVLLCIVVAAPYAEA), serve as a signal peptide directing secretion. Disulfide bonds link Cys-30–Cys-76, Cys-40–Cys-53, Cys-54–Cys-99, and Cys-74–Cys-113.

This sequence belongs to the plant LTP family.

Functionally, plant non-specific lipid-transfer proteins transfer phospholipids as well as galactolipids across membranes. May play a role in wax or cutin deposition in the cell walls of expanding epidermal cells and certain secretory tissues. The protein is Non-specific lipid-transfer protein of Spinacia oleracea (Spinach).